The sequence spans 213 residues: Orotate phosphoribosyltransferase (213 aa).

Lys26 provides a ligand contact to 5-phospho-alpha-D-ribose 1-diphosphate. 34–35 contributes to the orotate binding site; sequence FF. 5-phospho-alpha-D-ribose 1-diphosphate is bound by residues 72-73, Arg99, Lys100, Lys103, His105, and 124-132; these read YK and DDVITAGTA. Residues Thr128 and Arg156 each coordinate orotate.

This sequence belongs to the purine/pyrimidine phosphoribosyltransferase family. PyrE subfamily. As to quaternary structure, homodimer. Mg(2+) serves as cofactor.

The enzyme catalyses orotidine 5'-phosphate + diphosphate = orotate + 5-phospho-alpha-D-ribose 1-diphosphate. Its pathway is pyrimidine metabolism; UMP biosynthesis via de novo pathway; UMP from orotate: step 1/2. Catalyzes the transfer of a ribosyl phosphate group from 5-phosphoribose 1-diphosphate to orotate, leading to the formation of orotidine monophosphate (OMP). The polypeptide is Orotate phosphoribosyltransferase (Salmonella typhi).